The sequence spans 300 residues: NAD kinase (300 aa).

The active-site Proton acceptor is the Asp75. Residues 75 to 76, 149 to 150, Arg177, Asp179, 190 to 195, Ala214, and Gln248 each bind NAD(+); these read DG, ND, and TAYALS.

This sequence belongs to the NAD kinase family. A divalent metal cation is required as a cofactor.

Its subcellular location is the cytoplasm. It catalyses the reaction NAD(+) + ATP = ADP + NADP(+) + H(+). Functionally, involved in the regulation of the intracellular balance of NAD and NADP, and is a key enzyme in the biosynthesis of NADP. Catalyzes specifically the phosphorylation on 2'-hydroxyl of the adenosine moiety of NAD to yield NADP. This Burkholderia multivorans (strain ATCC 17616 / 249) protein is NAD kinase.